A 755-amino-acid polypeptide reads, in one-letter code: Polyribonucleotide nucleotidyltransferase (755 aa).

Positions 527 and 533 each coordinate Mg(2+). Residues 593–652 form the KH domain; sequence PRITTIKVPVDKIGEVIGPKGKMINSITEETGANISIEDDGTVFVGAADGASAQAAIDKI. The S1 motif domain maps to 664–733; the sequence is GERFLGTVVK…NRGKISLVPV (70 aa). The disordered stretch occupies residues 734 to 755; it reads GEEDAAEAPAPAEAQPADAVTQ. The segment covering 740-755 has biased composition (low complexity); that stretch reads EAPAPAEAQPADAVTQ.

It belongs to the polyribonucleotide nucleotidyltransferase family. Requires Mg(2+) as cofactor.

Its subcellular location is the cytoplasm. It catalyses the reaction RNA(n+1) + phosphate = RNA(n) + a ribonucleoside 5'-diphosphate. Functionally, involved in mRNA degradation. Catalyzes the phosphorolysis of single-stranded polyribonucleotides processively in the 3'- to 5'-direction. The polypeptide is Polyribonucleotide nucleotidyltransferase (Mycobacteroides abscessus (strain ATCC 19977 / DSM 44196 / CCUG 20993 / CIP 104536 / JCM 13569 / NCTC 13031 / TMC 1543 / L948) (Mycobacterium abscessus)).